Consider the following 95-residue polypeptide: Neutrophil antibiotic peptide NP-4 (95 aa).

The signal sequence occupies residues Met-1–Ala-19. Positions Glu-20–Gly-62 are excised as a propeptide. Intrachain disulfides connect Cys-65/Cys-93, Cys-67/Cys-82, and Cys-72/Cys-92.

The protein belongs to the alpha-defensin family.

It localises to the secreted. In terms of biological role, microbicidal activity. The sequence is that of Neutrophil antibiotic peptide NP-4 from Oryctolagus cuniculus (Rabbit).